The following is a 254-amino-acid chain: MDGGDDGNLIIKKRFVSEAELDERRKRRQEEWEKVRKPEDPEECPEEVYDPRSLYERLQEQKDRKQQEYEEQFKFKNMVRGLDEDETNFLDEVSRQQELIEKQRREEELKELKEYRNNLKKVGISQENKKEVEKKLTVKPIETKNKFSQAKLLAGAVKHKSSESGNSVKRLKPDPEPDDKNQEPSSCKSLGNTSLSGPSIHCPSAAVCIGILPGLGAYSGSSDSESSSDSEGTINATGKIVSSIFRTNTFLEAP.

Met1 is modified (N-acetylmethionine). A Phosphoserine modification is found at Ser17. The segment covering 22–39 (DERRKRRQEEWEKVRKPE) has biased composition (basic and acidic residues). The segment at 22-52 (DERRKRRQEEWEKVRKPEDPEECPEEVYDPR) is disordered. Lys139 bears the N6-acetyllysine mark. The disordered stretch occupies residues 155 to 195 (GAVKHKSSESGNSVKRLKPDPEPDDKNQEPSSCKSLGNTSL). Over residues 171-182 (LKPDPEPDDKNQ) the composition is skewed to basic and acidic residues. Over residues 183-195 (EPSSCKSLGNTSL) the composition is skewed to polar residues. Residues 201–254 (HCPSAAVCIGILPGLGAYSGSSDSESSSDSEGTINATGKIVSSIFRTNTFLEAP) are interaction with PSME3. Phosphoserine; by CK2 occurs at positions 222 and 228.

In terms of assembly, interacts (via C-terminus) with both free and 20S proteasome-bound forms of the proteasome activator complex subunit PSME3; the interaction is direct. Phosphorylation by CK2 stabilizes the interaction with PSME3.

Its subcellular location is the nucleus. Promotes the association of the proteasome activator complex subunit PSME3 with the 20S proteasome and regulates its activity. Inhibits PSME3-mediated degradation of some proteasome substrates, probably by affecting their diffusion rate into the catalytic chamber of the proteasome. Also inhibits the interaction of PSME3 with COIL, inhibits accumulation of PSME3 in Cajal bodies and positively regulates the number of Cajal bodies in the nucleus. This chain is PSME3-interacting protein, found in Homo sapiens (Human).